The sequence spans 141 residues: Large ribosomal subunit protein uL11 (141 aa).

It belongs to the universal ribosomal protein uL11 family. Part of the ribosomal stalk of the 50S ribosomal subunit. Interacts with L10 and the large rRNA to form the base of the stalk. L10 forms an elongated spine to which L12 dimers bind in a sequential fashion forming a multimeric L10(L12)X complex. In terms of processing, one or more lysine residues are methylated.

Functionally, forms part of the ribosomal stalk which helps the ribosome interact with GTP-bound translation factors. In Streptococcus pneumoniae (strain Hungary19A-6), this protein is Large ribosomal subunit protein uL11.